A 227-amino-acid polypeptide reads, in one-letter code: Homeobox-leucine zipper protein ATHB-54 (227 aa).

Positions E65–Q124 form a DNA-binding region, homeobox. The leucine-zipper stretch occupies residues L125–L153. Residues I175–E198 are disordered.

It belongs to the HD-ZIP homeobox family. Class I subfamily. As to expression, predominantly expressed in flowers and siliques.

The protein localises to the nucleus. Its function is as follows. Probable transcription factor. This chain is Homeobox-leucine zipper protein ATHB-54 (ATHB-54), found in Arabidopsis thaliana (Mouse-ear cress).